Consider the following 419-residue polypeptide: Protein transport protein sec9 (419 aa).

Residues 1–11 (MKKLFKKKKGV) show a composition bias toward basic residues. Disordered regions lie at residues 1-60 (MKKL…TYGS), 116-143 (ARKD…PSQD), and 156-186 (ARIQ…EGYR). Positions 21–32 (ESNSNTATNAPS) are enriched in polar residues. A compositionally biased stretch (low complexity) spans 36 to 60 (GGTTANSYSSNSYNDNNNSNSTYGS). At Ser-141 the chain carries Phosphoserine. T-SNARE coiled-coil homology domains are found at residues 203–265 (QFVK…AREL) and 356–418 (DAME…LRHI).

This sequence belongs to the SNAP-25 family.

Functionally, has a role in cell separation, a final step of cytokinesis and in the assembly of the forespore membrane. May have a role in the transport of secretory proteins to these growing sites. The protein is Protein transport protein sec9 (sec9) of Schizosaccharomyces pombe (strain 972 / ATCC 24843) (Fission yeast).